Reading from the N-terminus, the 675-residue chain is Putative acyl-coenzyme A oxidase 3.2, peroxisomal (675 aa).

The N-terminal 34 residues, 1 to 34 (MSENVELRRAHILANHILRSPRPSSNPSLTPEVC), are a transit peptide targeting the peroxisome. 442–457 (AVGGQGLKTENRVGHL) is a binding site for FAD.

Belongs to the acyl-CoA oxidase family. Requires FAD as cofactor.

It is found in the peroxisome. The enzyme catalyses a 2,3-saturated acyl-CoA + O2 = a (2E)-enoyl-CoA + H2O2. Catalyzes the desaturation of acyl-CoAs to 2-trans-enoyl-CoAs. The polypeptide is Putative acyl-coenzyme A oxidase 3.2, peroxisomal (ACX3.2) (Arabidopsis thaliana (Mouse-ear cress)).